A 235-amino-acid polypeptide reads, in one-letter code: Cell division protein FtsQ (235 aa).

Residues 1-6 lie on the Cytoplasmic side of the membrane; it reads MERLTR. Residues 7 to 25 form a helical membrane-spanning segment; the sequence is WLLVMMAMLLAASGLVWFY. Residues 26-235 are Periplasmic-facing; sequence NSNHLPVKQV…DGLPEKESEE (210 aa). The 70-residue stretch at 30–99 folds into the POTRA domain; that stretch reads LPVKQVSLKG…DTVEVVLTER (70 aa).

This sequence belongs to the FtsQ/DivIB family. FtsQ subfamily. In terms of assembly, part of a complex composed of FtsB, FtsL and FtsQ.

It is found in the cell inner membrane. Functionally, essential cell division protein. May link together the upstream cell division proteins, which are predominantly cytoplasmic, with the downstream cell division proteins, which are predominantly periplasmic. May control correct divisome assembly. The sequence is that of Cell division protein FtsQ from Neisseria meningitidis serogroup B (strain ATCC BAA-335 / MC58).